Here is a 134-residue protein sequence, read N- to C-terminus: Large ribosomal subunit protein eL32 (134 aa).

Belongs to the eukaryotic ribosomal protein eL32 family.

The sequence is that of Large ribosomal subunit protein eL32 (RpL32) from Drosophila affinis (Fruit fly).